The primary structure comprises 228 residues: Translin (228 aa).

Positions 86–90 are DNA/RNA binding; the sequence is RFHEH. The interval 177 to 198 is leucine-zipper; that stretch reads LDSGFRLLNLKNDSLRKRYDGL. Lysine 187 carries the N6-acetyllysine modification. The residue at position 190 (serine 190) is a Phosphoserine. Position 199 is an N6-acetyllysine (lysine 199).

Belongs to the translin family. Ring-shaped heterooctamer of six TSN and two TSNAX subunits, DNA/RNA binding occurs inside the ring.

Its subcellular location is the cytoplasm. The protein resides in the nucleus. Functionally, DNA-binding protein that specifically recognizes consensus sequences at the breakpoint junctions in chromosomal translocations, mostly involving immunoglobulin (Ig)/T-cell receptor gene segments. Seems to recognize single-stranded DNA ends generated by staggered breaks occurring at recombination hot spots. Exhibits both single-stranded and double-stranded endoribonuclease activity. May act as an activator of RNA-induced silencing complex (RISC) by facilitating endonucleolytic cleavage of the siRNA passenger strand. The chain is Translin (TSN) from Cricetulus griseus (Chinese hamster).